The primary structure comprises 168 residues: Photosystem I assembly protein Ycf3 (168 aa).

TPR repeat units follow at residues 35–68, 72–105, and 120–153; these read AFTY…EIDP, SYIL…NPFL, and GEQA…TPGN.

This sequence belongs to the Ycf3 family.

The protein localises to the plastid. It localises to the chloroplast thylakoid membrane. Essential for the assembly of the photosystem I (PSI) complex. May act as a chaperone-like factor to guide the assembly of the PSI subunits. This chain is Photosystem I assembly protein Ycf3, found in Panax ginseng (Korean ginseng).